A 222-amino-acid polypeptide reads, in one-letter code: Eukaryotic translation initiation factor 3 subunit K (222 aa).

Residues 46 to 208 form the PCI domain; that stretch reads YDLEANLAVL…KIKTKNITEK (163 aa).

It belongs to the eIF-3 subunit K family. In terms of assembly, component of the eukaryotic translation initiation factor 3 (eIF-3) complex. The eIF-3 complex interacts with pix.

Its subcellular location is the cytoplasm. Component of the eukaryotic translation initiation factor 3 (eIF-3) complex, which is involved in protein synthesis of a specialized repertoire of mRNAs and, together with other initiation factors, stimulates binding of mRNA and methionyl-tRNAi to the 40S ribosome. The eIF-3 complex specifically targets and initiates translation of a subset of mRNAs involved in cell proliferation. This Drosophila willistoni (Fruit fly) protein is Eukaryotic translation initiation factor 3 subunit K.